Reading from the N-terminus, the 259-residue chain is MSGVSFELGGVSISSRLVLGTGGAANLHVLEQAIRAAGTGLVTVALRRVDSTPGGSGGLLDLIDRCGVRLLPNTAGCYTAGEAVKVAHLAREAFDTDWVKLEVIGDERTLLPDGVELLRAAEELVAEGFTVLPYTSDDPILARRLADVGCAAVMPAGSPIGSGLGVSNPHHIRLIRQCVDVPVILDAGIGTASDAALAMELGCDAVLLASAVTRAADPVAMATAMRYAVEAGRLAYRAGRIPRRFHALASTPDDGRPEL.

Lysine 100 (schiff-base intermediate with DXP) is an active-site residue. Residues glycine 161, 187–188, and 209–210 each bind 1-deoxy-D-xylulose 5-phosphate; these read AG and AS.

This sequence belongs to the ThiG family. Homotetramer. Forms heterodimers with either ThiH or ThiS.

It is found in the cytoplasm. The catalysed reaction is [ThiS sulfur-carrier protein]-C-terminal-Gly-aminoethanethioate + 2-iminoacetate + 1-deoxy-D-xylulose 5-phosphate = [ThiS sulfur-carrier protein]-C-terminal Gly-Gly + 2-[(2R,5Z)-2-carboxy-4-methylthiazol-5(2H)-ylidene]ethyl phosphate + 2 H2O + H(+). It participates in cofactor biosynthesis; thiamine diphosphate biosynthesis. In terms of biological role, catalyzes the rearrangement of 1-deoxy-D-xylulose 5-phosphate (DXP) to produce the thiazole phosphate moiety of thiamine. Sulfur is provided by the thiocarboxylate moiety of the carrier protein ThiS. In vitro, sulfur can be provided by H(2)S. The chain is Thiazole synthase from Salinispora arenicola (strain CNS-205).